We begin with the raw amino-acid sequence, 223 residues long: Bone marrow proteoglycan (223 aa).

Residues 1–16 form the signal peptide; that stretch reads MKFPLLLALLVGGASA. A propeptide spans 17–106 (acidic); that stretch reads LHLSSETSDS…TSLMGDSGCK (90 aa). Positions 20–81 are disordered; that stretch reads SSETSDSKSP…PGDEGAVSGQ (62 aa). O-linked (GalNAc...) threonine; partial glycosylation is present at Thr23. An O-linked (GalNAc...) serine glycan is attached at Ser24. O-linked (Xyl...) (chondroitin sulfate) serine glycosylation is present at Ser66. A C-type lectin domain is found at 124–223; the sequence is SVCRRCYRGT…VKRRPFICSY (100 aa). Disulfide bonds link Cys126/Cys221 and Cys198/Cys213.

Post-translationally, nitrated.

It is found in the secreted. Cytotoxin and helminthotoxin. MBP also induces non-cytolytic histamine release from basophils. It is involved in antiparasitic defense mechanisms and immune hypersensitivity reactions. This Mus musculus (Mouse) protein is Bone marrow proteoglycan (Prg2).